We begin with the raw amino-acid sequence, 679 residues long: Genome polyprotein (679 aa).

Positions 1-14 (SAGMIIMLIPTVMA) are cleaved as a propeptide — ER anchor for the capsid protein C, removed in mature form by serine protease NS3. Residues 2–22 (AGMIIMLIPTVMAFHLTTRNG) traverse the membrane as a helical segment. Topologically, residues 23-138 (EPHMIVSRQE…GAWKHAQRIE (116 aa)) are extracellular. N-linked (GlcNAc...) asparagine; by host glycosylation is present at N83. A helical membrane pass occupies residues 139 to 159 (IWILRHPGFTIMAAILAYTIG). Topologically, residues 160–165 (TTHFQR) are cytoplasmic. The helical transmembrane segment at 166–180 (ALIFILLTAVAPSMT) threads the bilayer. The Extracellular portion of the chain corresponds to 181–625 (MRCIGISNRD…LHQVFGAIYG (445 aa)). 4 disulfide bridges follow: C183–C210, C240–C301, C254–C285, and C272–C296. N247 is a glycosylation site (N-linked (GlcNAc...) asparagine; by host). The fusion peptide stretch occupies residues 278-291 (DRGWGNGCGLFGKG). A glycan (N-linked (GlcNAc...) asparagine; by host) is linked at N333. 2 disulfides stabilise this stretch: C365–C465 and C482–C513. Residues 626–646 (AAFSGVSWTMKILIGVIITWI) form a helical membrane-spanning segment. Residues 647 to 652 (GMNSRS) lie on the Cytoplasmic side of the membrane. A helical membrane pass occupies residues 653-673 (TSLSVSLVLVGIVTLYLGVMV). At 674 to 679 (QADSGC) the chain is on the extracellular side.

In terms of assembly, forms heterodimers with envelope protein E in the endoplasmic reticulum and Golgi. As to quaternary structure, homodimer; in the endoplasmic reticulum and Golgi. Interacts with protein prM. Interacts with non-structural protein 1. Post-translationally, cleaved in post-Golgi vesicles by a host furin, releasing the mature small envelope protein M, and peptide pr. This cleavage is incomplete as up to 30% of viral particles still carry uncleaved prM. N-glycosylated. In terms of processing, N-glycosylated. The excreted form is glycosylated and this is required for efficient secretion of the protein from infected cells. Post-translationally, specific enzymatic cleavages in vivo yield mature proteins. Cleavages in the lumen of endoplasmic reticulum are performed by host signal peptidase, wereas cleavages in the cytoplasmic side are performed by serine protease NS3. Signal cleavage at the 2K-4B site requires a prior NS3 protease-mediated cleavage at the 4A-2K site.

It is found in the secreted. The protein localises to the virion membrane. The protein resides in the host endoplasmic reticulum membrane. Its function is as follows. Prevents premature fusion activity of envelope proteins in trans-Golgi by binding to envelope protein E at pH6.0. After virion release in extracellular space, gets dissociated from E dimers. In terms of biological role, acts as a chaperone for envelope protein E during intracellular virion assembly by masking and inactivating envelope protein E fusion peptide. prM is the only viral peptide matured by host furin in the trans-Golgi network probably to avoid catastrophic activation of the viral fusion activity in acidic Golgi compartment prior to virion release. prM-E cleavage is inefficient, and many virions are only partially matured. These uncleaved prM would play a role in immune evasion. May play a role in virus budding. Exerts cytotoxic effects by activating a mitochondrial apoptotic pathway through M ectodomain. May display a viroporin activity. Functionally, binds to host cell surface receptor and mediates fusion between viral and cellular membranes. Envelope protein is synthesized in the endoplasmic reticulum in the form of heterodimer with protein prM. They play a role in virion budding in the ER, and the newly formed immature particle is covered with 60 spikes composed of heterodimer between precursor prM and envelope protein E. The virion is transported to the Golgi apparatus where the low pH causes dissociation of PrM-E heterodimers and formation of E homodimers. prM-E cleavage is inefficient, and many virions are only partially matured. These uncleaved prM would play a role in immune evasion. Its function is as follows. Involved in immune evasion, pathogenesis and viral replication. Once cleaved off the polyprotein, is targeted to three destinations: the viral replication cycle, the plasma membrane and the extracellular compartment. Essential for viral replication. Required for formation of the replication complex and recruitment of other non-structural proteins to the ER-derived membrane structures. Excreted as a hexameric lipoparticle that plays a role against host immune response. Antagonizing the complement function. Binds to the host macrophages and dendritic cells. Inhibits signal transduction originating from Toll-like receptor 3 (TLR3). In terms of biological role, disrupts the host endothelial glycocalyx layer of host pulmonary microvascular endothelial cells, inducing degradation of sialic acid and shedding of heparan sulfate proteoglycans. NS1 induces expression of sialidases, heparanase, and activates cathepsin L, which activates heparanase via enzymatic cleavage. These effects are probably linked to the endothelial hyperpermeability observed in severe dengue disease. This is Genome polyprotein from Dengue virus type 2 (strain Thailand/PUO-218/1980) (DENV-2).